Reading from the N-terminus, the 346-residue chain is 36.4 kDa proline-rich protein (346 aa).

Residues 11–144 form a disordered region; it reads PYPPSTPKHP…PFTPKPPSPI (134 aa). 3 stretches are compositionally biased toward pro residues: residues 25–42, 51–81, and 89–144; these read KVKPPSTQPPHVKPPSTP, VKPPSTPKQPPYVKPPTTPKHPPHVKPPSTP, and QKPC…PSPI.

The sequence is that of 36.4 kDa proline-rich protein (TPRP-F1) from Solanum lycopersicum (Tomato).